The sequence spans 307 residues: MVPVLLSLPLLLGPAVFQETGSYYLTFLYTGLSRPSKGFPRFQATAFLNDQAFFHYNSNSGKAEPVGPWSQVEGMEDWEKESQLQRAREEIFLVTLKDIMDYYKDTTGSHTFQGMFGCEITNNRSSGAVWRYAYDGEDFIEFNKEIPAWIPLDPAAANTKLKWEAEKVYVQRAKAYLEEECPEMLKRYLNYSRSHLDRIDPPTVTITSRVIPGGNRIFKCLAYGFYPQRISLHWNKANKKLAFEPERGVFPNGNGTYLSWAEVEVSPQDIDPFFCLIDHRGFSQSLSVQWDRTRKVKDENNVVAQPQ.

A signal peptide spans 1–17; that stretch reads MVPVLLSLPLLLGPAVF. Glutamine 18 is subject to Pyrrolidone carboxylic acid. Cysteine 118 and cysteine 181 form a disulfide bridge. Residues asparagine 123, asparagine 190, and asparagine 254 are each glycosylated (N-linked (GlcNAc...) asparagine). An Ig-like C1-type domain is found at 202–287; sequence PTVTITSRVI…DHRGFSQSLS (86 aa). A disulfide bridge links cysteine 220 with cysteine 275.

It belongs to the MHC class I family. As to quaternary structure, interacts with PIP.

The protein resides in the secreted. Functionally, stimulates lipid degradation in adipocytes and causes the extensive fat losses associated with some advanced cancers. This is Zinc-alpha-2-glycoprotein (Azgp1) from Mus musculus (Mouse).